The sequence spans 273 residues: Hydroxyethylthiazole kinase (273 aa).

Met47 serves as a coordination point for substrate. The ATP site is built by Arg123 and Thr172. Residue Gly199 participates in substrate binding.

The protein belongs to the Thz kinase family. Mg(2+) is required as a cofactor.

It carries out the reaction 5-(2-hydroxyethyl)-4-methylthiazole + ATP = 4-methyl-5-(2-phosphooxyethyl)-thiazole + ADP + H(+). It participates in cofactor biosynthesis; thiamine diphosphate biosynthesis; 4-methyl-5-(2-phosphoethyl)-thiazole from 5-(2-hydroxyethyl)-4-methylthiazole: step 1/1. Catalyzes the phosphorylation of the hydroxyl group of 4-methyl-5-beta-hydroxyethylthiazole (THZ). This is Hydroxyethylthiazole kinase from Ruminiclostridium cellulolyticum (strain ATCC 35319 / DSM 5812 / JCM 6584 / H10) (Clostridium cellulolyticum).